A 140-amino-acid polypeptide reads, in one-letter code: Large ribosomal subunit protein uL11 (140 aa).

Belongs to the universal ribosomal protein uL11 family. In terms of assembly, part of the ribosomal stalk of the 50S ribosomal subunit. Interacts with L10 and the large rRNA to form the base of the stalk. L10 forms an elongated spine to which L12 dimers bind in a sequential fashion forming a multimeric L10(L12)X complex. Post-translationally, one or more lysine residues are methylated.

In terms of biological role, forms part of the ribosomal stalk which helps the ribosome interact with GTP-bound translation factors. The chain is Large ribosomal subunit protein uL11 from Campylobacter hominis (strain ATCC BAA-381 / DSM 21671 / CCUG 45161 / LMG 19568 / NCTC 13146 / CH001A).